We begin with the raw amino-acid sequence, 217 residues long: Probable transaldolase (217 aa).

Lys83 functions as the Schiff-base intermediate with substrate in the catalytic mechanism.

This sequence belongs to the transaldolase family. Type 3B subfamily.

Its subcellular location is the cytoplasm. It carries out the reaction D-sedoheptulose 7-phosphate + D-glyceraldehyde 3-phosphate = D-erythrose 4-phosphate + beta-D-fructose 6-phosphate. It functions in the pathway carbohydrate degradation; pentose phosphate pathway; D-glyceraldehyde 3-phosphate and beta-D-fructose 6-phosphate from D-ribose 5-phosphate and D-xylulose 5-phosphate (non-oxidative stage): step 2/3. Its function is as follows. Transaldolase is important for the balance of metabolites in the pentose-phosphate pathway. This Coprothermobacter proteolyticus (strain ATCC 35245 / DSM 5265 / OCM 4 / BT) protein is Probable transaldolase.